A 331-amino-acid chain; its full sequence is Ribose-phosphate pyrophosphokinase (331 aa).

Residue 55-57 (DGE) coordinates ATP. Mg(2+)-binding residues include His148 and Asp187. Lys211 is an active-site residue. D-ribose 5-phosphate-binding positions include Arg213, Asp237, and 241–245 (DTGGT).

The protein belongs to the ribose-phosphate pyrophosphokinase family. Class I subfamily. As to quaternary structure, homohexamer. The cofactor is Mg(2+).

Its subcellular location is the cytoplasm. It carries out the reaction D-ribose 5-phosphate + ATP = 5-phospho-alpha-D-ribose 1-diphosphate + AMP + H(+). It participates in metabolic intermediate biosynthesis; 5-phospho-alpha-D-ribose 1-diphosphate biosynthesis; 5-phospho-alpha-D-ribose 1-diphosphate from D-ribose 5-phosphate (route I): step 1/1. Functionally, involved in the biosynthesis of the central metabolite phospho-alpha-D-ribosyl-1-pyrophosphate (PRPP) via the transfer of pyrophosphoryl group from ATP to 1-hydroxyl of ribose-5-phosphate (Rib-5-P). The polypeptide is Ribose-phosphate pyrophosphokinase (Parasynechococcus marenigrum (strain WH8102)).